The following is a 358-amino-acid chain: Aromatic amino acid aminotransferase (358 aa).

Residue lysine 214 is modified to N6-(pyridoxal phosphate)lysine.

Belongs to the class-II pyridoxal-phosphate-dependent aminotransferase family. Homodimer. The cofactor is pyridoxal 5'-phosphate.

The catalysed reaction is an aromatic L-alpha-amino acid + 2-oxoglutarate = an aromatic oxo-acid + L-glutamate. Functionally, aminotransferase that catalyzes the conversion of aromatic amino acids and 2-oxoglutarate into corresponding aromatic oxo acids and L-glutamate. This is Aromatic amino acid aminotransferase from Rhodococcus jostii (strain RHA1).